A 209-amino-acid chain; its full sequence is Bilin biosynthesis protein RpcF (209 aa).

The protein belongs to the CpcE/RpcE/PecE family.

Functionally, an enzyme involved in the biosynthesis of bilin. Might be involved in the specific attachment of phycoerythrobilin (PEB) to the R-phycocyanin II alpha chain. This chain is Bilin biosynthesis protein RpcF (rpcF), found in Synechococcus sp. (strain WH8020).